The following is a 182-amino-acid chain: MKNLFRTAALMVPLSLALAYGAQAKEIPIGKPQLLGGMEIAAVYLQPIEMEPEGMMRPAKDSDVHLEADIKAAKDNTNGFAEGDWVPYLVVSYELTHLDNGKVQKGDFMPMVANDGPHYGDNVKLDGPGKYKLKLFVSPPSANQHAHFGRHVDKETGVGPWFKPVTAEYEFVYAGTGKKGAY.

The first 24 residues, 1–24 (MKNLFRTAALMVPLSLALAYGAQA), serve as a signal peptide directing secretion.

It belongs to the UPF0423 family.

In Brucella suis biovar 1 (strain 1330), this protein is UPF0423 protein BRA0381/BS1330_II0378.